The chain runs to 296 residues: 5,10-methylenetetrahydrofolate reductase (296 aa).

Catalysis depends on Glu28, which acts as the Proton donor/acceptor. Residue Thr59 participates in NADH binding. The FAD site is built by Tyr60, Ala62, His88, Arg118, Gly119, Asp120, Ala132, Tyr152, His156, Ala159, Asp165, Asn168, Arg171, and Lys172. (6S)-5-methyl-5,6,7,8-tetrahydrofolate is bound at residue Asp120. Gln183 is an NADH binding site. The (6S)-5-methyl-5,6,7,8-tetrahydrofolate site is built by Gln183, Gln219, and Arg279.

It belongs to the methylenetetrahydrofolate reductase family. FAD is required as a cofactor.

The catalysed reaction is (6S)-5-methyl-5,6,7,8-tetrahydrofolate + NAD(+) = (6R)-5,10-methylene-5,6,7,8-tetrahydrofolate + NADH + H(+). The protein operates within one-carbon metabolism; tetrahydrofolate interconversion. It participates in amino-acid biosynthesis; L-methionine biosynthesis via de novo pathway. Its function is as follows. Catalyzes the NADH-dependent reduction of 5,10-methylenetetrahydrofolate to 5-methyltetrahydrofolate. Is required to provide the methyl group necessary for methionine synthetase to convert homocysteine to methionine; the methyl group is given by 5-methyltetrahydrofolate. The chain is 5,10-methylenetetrahydrofolate reductase (metF) from Salmonella typhimurium (strain LT2 / SGSC1412 / ATCC 700720).